Reading from the N-terminus, the 477-residue chain is Myc-associated zinc finger protein (477 aa).

Disordered stretches follow at residues 59–78 (AQSPFQAAPAPPPTPQAPAA) and 121–144 (TVDTAALKQPPAPPPPPPAVSAPA). Positions 130 to 140 (PPAPPPPPPAV) are enriched in pro residues. C2H2-type zinc fingers lie at residues 190-212 (YICALCAKEFKNGYNLRRHEAIH), 279-301 (HACEMCGKAFRDVYHLNRHKLSH), 307-329 (YQCPVCQQRFKRKDRMSYHVRSH), and 337-360 (YNCSHCGKSFSRPDHLNSHVRQVH). Ser361 bears the Phosphoserine mark. Residues 366–388 (FKCEKCEAAFATKDRLRAHTVRH) form a C2H2-type 5 zinc finger. Residues 392 to 413 (VPCHVCGKMLSSAYISDHMKVH) form a C2H2-type 6; atypical zinc finger.

As to quaternary structure, interacts with BPTF. As to expression, expressed in Purkinje cells in the brain (at protein level).

The protein localises to the nucleus. Functionally, transcriptional regulator. Acts as a transcriptional activator that binds to purine-rich GAGA sites found in the promoter of many genes including insulin I and II and islet amyloid polypeptide. The polypeptide is Myc-associated zinc finger protein (Maz) (Mus musculus (Mouse)).